A 226-amino-acid polypeptide reads, in one-letter code: MKFKAIAKASLALGMLATGVITSNVQSVQAKAEVKQQSESELKHYYNKPILERKNVTGFKYTDEGKHYLEVTVGQQHSRITLLGSDKDKFKDGENSNIDVFILREGDSRQATNYSIGGVTKSNSVQYIDYINTPILEIKKDNEDVLKDFYYISKEDISLKELDYRLRERAIKQHGLYSNGLKQGQITITMNDGTTHTIDLSQKLEKERMGESIDGTKINKILVEMK.

Residues 1 to 30 form the signal peptide; sequence MKFKAIAKASLALGMLATGVITSNVQSVQA.

Belongs to the staphylococcal/streptococcal toxin family. In terms of assembly, homodimer.

The protein localises to the secreted. In terms of biological role, mediates virulence by proteolytically cleaving host proteins, including collagens types I and IV as well as human cytokines IL8, IL17A, and IFN-gamma. This Staphylococcus aureus (strain NCTC 8325 / PS 47) protein is Staphylococcal superantigen-like 1.